Here is a 218-residue protein sequence, read N- to C-terminus: MGSAALEILGLVLCLVGWGGLILACGLPMWQVTAFLDHNIVTAQTTWKGLWMSCVVQSTGHMQCKVYDSVLALSTEVQAARALTVSAVLLAFVALFVTLAGAQCTTCVAPGPAKARVALTGGVLYLFCGLLALVPLCWFANIVVREFYDPSVPVSQKYELGAALYIGWAATALLMVGGCLLCCGAWVCTGRPDLSFPVKYSAPRRPTATGDYDKKNYV.

Over M1–E7 the chain is Cytoplasmic. A helical membrane pass occupies residues I8–P28. At M29–R81 the chain is on the extracellular side. Residues A82–A102 form a helical membrane-spanning segment. Over Q103 to G122 the chain is Cytoplasmic. A helical transmembrane segment spans residues V123–V143. The Extracellular segment spans residues V144 to E159. Residues L160–L180 form a helical membrane-spanning segment. Residues L181–V218 lie on the Cytoplasmic side of the membrane. Positions Y217–V218 are interactions with TJP1, TJP2 and TJP3.

This sequence belongs to the claudin family. In terms of assembly, directly interacts with TJP1/ZO-1, TJP2/ZO-2 and TJP3/ZO-3. Interacts with MPDZ.

It localises to the cell junction. Its subcellular location is the tight junction. It is found in the cell membrane. Functionally, plays a major role in tight junction-specific obliteration of the intercellular space. The protein is Claudin-5 (CLDN5) of Homo sapiens (Human).